The following is a 107-amino-acid chain: MGRKRFITDSYPVVKKREGPPGHSKGELAPELGEDTQSLSQEETELELLRQFDLAWQYGPCTGITRLQRWSRAEQMGLKPPLEVYQVLKAHPEDPHFQCSLWHLYPL.

A PCNA-interaction protein motif (PIP box) motif is present at residues 1–16 (MGRKRFITDSYPVVKK). A disordered region spans residues 1–40 (MGRKRFITDSYPVVKKREGPPGHSKGELAPELGEDTQSLS). The segment covering 15 to 28 (KKREGPPGHSKGEL) has biased composition (basic and acidic residues).

This sequence belongs to the DNA polymerase delta subunit 4 family. Component of the tetrameric DNA polymerase delta complex (Pol-delta4), which consists of POLD1/p125, POLD2/p50, POLD3/p66/p68 and POLD4/p12, with POLD1 bearing DNA polymerase and 3' to 5' proofreading exonuclease activities. Within this complex, directly interacts with POLD1 and POLD2. Directly interacts with PCNA, as do POLD1 and POLD3; this interaction stimulates Pol-delta4 polymerase activity. As POLD1 and POLD2, directly interacts with WRNIP1; this interaction stimulates DNA polymerase delta-mediated DNA synthesis, independently of the presence of PCNA, possibly by increasing initiation frequency. Upon genotoxic stress induced by DNA damaging agents or by replication stress, POLD4 is proteolytically degraded and Pol-delta4 is converted into a trimeric form of the complex (Pol-delta3) that has an increased proofreading activity. The DNA polymerase delta complex interacts with POLDIP2; this interaction is probably mediated through direct binding to POLD2. Post-translationally, ubiquitinated; undergoes 'Lys-48'-linked polyubiquitination in response to UV irradiation or treatment with an alkylating agent, leading to proteasomal degradation. This modification is mediated, at least in part, by RNF8. In terms of processing, ubiquitinated; undergoes 'Lys-48'-linked ubiquitination in response to UV irradiation, leading to proteasomal degradation. This modification is partly mediated by RNF8 and by the DCX(DTL) E3 ubiquitin ligase complex (also called CRL4(CDT2)). Efficient degradation requires the presence of PCNA and is required for the inhibition of fork progression after DNA damage.

Its subcellular location is the nucleus. In terms of biological role, as a component of the tetrameric DNA polymerase delta complex (Pol-delta4), plays a role in high fidelity genome replication and repair. Within this complex, increases the rate of DNA synthesis and decreases fidelity by regulating POLD1 polymerase and proofreading 3' to 5' exonuclease activity. Pol-delta4 participates in Okazaki fragment processing, through both the short flap pathway, as well as a nick translation system. Under conditions of DNA replication stress, required for the repair of broken replication forks through break-induced replication (BIR), a mechanism that may induce segmental genomic duplications of up to 200 kb. Involved in Pol-delta4 translesion synthesis (TLS) of templates carrying O6-methylguanine or abasic sites. Its degradation in response to DNA damage is required for the inhibition of fork progression and cell survival. The polypeptide is DNA polymerase delta subunit 4 (Pold4) (Mus musculus (Mouse)).